Consider the following 193-residue polypeptide: Auxin-responsive protein IAA23 (193 aa).

Positions 1–12 are enriched in polar residues; the sequence is MSTSSGADSSPP. The tract at residues 1-66 is disordered; sequence MSTSSGADSS…SPKARAVGWP (66 aa). Over residues 21-36 the composition is skewed to low complexity; it reads TALTLALPGSSSSSSS. An EAR-like (transcriptional repression) motif is present at residues 23–27; it reads LTLAL. A compositionally biased stretch (basic and acidic residues) spans 39–53; sequence DPERKRAAHADHADA. One can recognise a PB1 domain in the interval 83 to 191; the sequence is AKLVKVAVDG…EAVNLSPRRS (109 aa).

Belongs to the Aux/IAA family. In terms of assembly, homodimers and heterodimers. In terms of tissue distribution, highly expressed in roots. Expressed in seedlings.

It localises to the nucleus. Its function is as follows. Aux/IAA proteins are short-lived transcriptional factors that function as repressors of early auxin response genes at low auxin concentrations. The protein is Auxin-responsive protein IAA23 (IAA23) of Oryza sativa subsp. japonica (Rice).